The chain runs to 117 residues: Nascent polypeptide-associated complex protein (117 aa).

One can recognise an NAC-A/B domain in the interval 3-72; that stretch reads PVNPRDLEKM…YTVEKPREET (70 aa).

It belongs to the NAC-alpha family. As to quaternary structure, homodimer. Interacts with the ribosome. Binds ribosomal RNA.

Its function is as follows. Contacts the emerging nascent chain on the ribosome. The chain is Nascent polypeptide-associated complex protein from Aeropyrum pernix (strain ATCC 700893 / DSM 11879 / JCM 9820 / NBRC 100138 / K1).